The chain runs to 143 residues: Transcriptional regulator MraZ (143 aa).

SpoVT-AbrB domains are found at residues 5–47 (EYQH…PKDE) and 76–119 (AIES…SKDN).

The protein belongs to the MraZ family. As to quaternary structure, forms oligomers.

The protein localises to the cytoplasm. Its subcellular location is the nucleoid. This is Transcriptional regulator MraZ from Oenococcus oeni (strain ATCC BAA-331 / PSU-1).